The primary structure comprises 219 residues: LHFPL tetraspan subfamily member 5 protein (219 aa).

The Cytoplasmic segment spans residues 1–24 (MVKLLPAQEAAKIYHTNYVRNSRA). Residues 25–45 (VGVMWGTLTICFSVLVMALFI) form a helical membrane-spanning segment. Residues 46-98 (QPYWIGDSVSTPQAGYFGLFSYCVGNVLSSELICKGGPLDFSSIPSRAFKTAM) are Extracellular-facing. Residues 99 to 119 (FFVALAMFLIIGSIICFSLFF) form a helical membrane-spanning segment. The Cytoplasmic portion of the chain corresponds to 120–128 (VCNTATVYK). Residues 129–149 (ICAWMQLAAATGLMIGCLVYP) form a helical membrane-spanning segment. The Extracellular segment spans residues 150–178 (DGWDSSEVRRMCGEQTGKYTLGHCTIRWA). The chain crosses the membrane as a helical span at residues 179–199 (FMLAILSIGDALILSFLAFVL). Residues 200-219 (GYRQDKLLPDDYKADGNEEV) are Cytoplasmic-facing.

It belongs to the LHFP family. Forms the MET channel composed of TMC (TMC1 or TMC2), TMIE, TOMT, CIB (CIB2 or CIB3), LHPL5 and PCDH15. Interaction with PCDH15 is required for efficient localization to hair bundles.

It is found in the cell membrane. Functionally, auxiliary subunit of the mechanotransducer (MET) non-specific cation channel complex located at the tips of the shorter stereocilia of cochlear hair cells and that mediates sensory transduction in the auditory system. The MET complex is composed of two dimeric pore-forming ion-conducting transmembrane TMC (TMC1 or TMC2) subunits, and aided by several auxiliary proteins including LHFPL5, TMIE, CIB2/3 and TOMT, and the tip-link PCDH15. Functionally couples PCDH15 to the transduction channel. This is LHFPL tetraspan subfamily member 5 protein from Rattus norvegicus (Rat).